Here is a 494-residue protein sequence, read N- to C-terminus: Zinc finger and SCAN domain-containing protein 30 (494 aa).

The 83-residue stretch at R48–L130 folds into the SCAN box domain. A Glycyl lysine isopeptide (Lys-Gly) (interchain with G-Cter in SUMO2) cross-link involves residue K197. 7 C2H2-type zinc fingers span residues Y301–H323, Y329–H351, Y357–H379, Y385–H407, Y413–H435, Y441–H463, and Y469–H491.

It belongs to the krueppel C2H2-type zinc-finger protein family.

It localises to the nucleus. May be involved in transcriptional regulation. The protein is Zinc finger and SCAN domain-containing protein 30 (ZSCAN30) of Homo sapiens (Human).